The following is a 129-amino-acid chain: Small ribosomal subunit protein uS8 (129 aa).

Belongs to the universal ribosomal protein uS8 family. In terms of assembly, part of the 30S ribosomal subunit. Contacts proteins S5 and S12.

One of the primary rRNA binding proteins, it binds directly to 16S rRNA central domain where it helps coordinate assembly of the platform of the 30S subunit. The chain is Small ribosomal subunit protein uS8 from Bdellovibrio bacteriovorus (strain ATCC 15356 / DSM 50701 / NCIMB 9529 / HD100).